Reading from the N-terminus, the 123-residue chain is KxDL motif-containing protein LO9-177 (123 aa).

Positions 78-81 match the KxDL motif; it reads KDDL.

The protein belongs to the KXD1 family. In terms of assembly, homodimer. Component of a nuclear cell elongation controlling complex made of ILI5/BUL1, LO9-177 and BC1. Binds directly to ILI5/BUL1, ILI4/BU1, BUL2 and BUL3. Binds to BC1 in the nucleus. Interacts with BCL1.

It is found in the nucleus. Its subcellular location is the cytoplasm. Contributes, together with ILI5/BUL1 and BC1, to the promotion of leaf inclination and grain size by modulating cell elongation. In Oryza sativa subsp. indica (Rice), this protein is KxDL motif-containing protein LO9-177.